Reading from the N-terminus, the 289-residue chain is Probable branched-chain-amino-acid aminotransferase (289 aa).

Lys154 carries the N6-(pyridoxal phosphate)lysine modification.

Belongs to the class-IV pyridoxal-phosphate-dependent aminotransferase family. It depends on pyridoxal 5'-phosphate as a cofactor.

It carries out the reaction L-leucine + 2-oxoglutarate = 4-methyl-2-oxopentanoate + L-glutamate. It catalyses the reaction L-isoleucine + 2-oxoglutarate = (S)-3-methyl-2-oxopentanoate + L-glutamate. The enzyme catalyses L-valine + 2-oxoglutarate = 3-methyl-2-oxobutanoate + L-glutamate. Its pathway is amino-acid biosynthesis; L-isoleucine biosynthesis; L-isoleucine from 2-oxobutanoate: step 4/4. The protein operates within amino-acid biosynthesis; L-leucine biosynthesis; L-leucine from 3-methyl-2-oxobutanoate: step 4/4. It functions in the pathway amino-acid biosynthesis; L-valine biosynthesis; L-valine from pyruvate: step 4/4. Its function is as follows. Acts on leucine, isoleucine and valine. The sequence is that of Probable branched-chain-amino-acid aminotransferase (ilvE) from Rickettsia bellii (strain RML369-C).